Reading from the N-terminus, the 500-residue chain is Xylan O-acetyltransferase 2 (500 aa).

Over 1–25 (MGLPGRRNPLLSARRAAASLRRSRR) the chain is Cytoplasmic. The helical; Signal-anchor for type II membrane protein transmembrane segment at 26-43 (LPVYVAAVFFVASVLLMF) threads the bilayer. Over 44–500 (RDEILYLTTA…RPPAAAGHVA (457 aa)) the chain is Lumenal. Residues 84–116 (PVLLGHGGKPEKHHSVTERHRPKVSAKRRPNKK) form a disordered region. Residues 91-102 (GKPEKHHSVTER) show a composition bias toward basic and acidic residues. The span at 103–116 (HRPKVSAKRRPNKK) shows a compositional bias: basic residues. Cystine bridges form between Cys-143/Cys-194, Cys-165/Cys-231, Cys-174/Cys-472, and Cys-388/Cys-468. Asn-144 and Asn-154 each carry an N-linked (GlcNAc...) asparagine glycan. Residues 218-220 (GDS) carry the GDS motif motif. Ser-220 functions as the Nucleophile in the catalytic mechanism. Residues Asn-260 and Asn-416 are each glycosylated (N-linked (GlcNAc...) asparagine). The active-site Proton donor is Asp-467. The DXXH motif signature appears at 467–470 (DCIH). His-470 acts as the Proton acceptor in catalysis.

The protein belongs to the PC-esterase family. TBL subfamily. Expressed at low levels in roots and leaves.

It is found in the golgi apparatus membrane. Xylan acetyltransferase required for 2-O- and 3-O-monoacetylation of xylosyl residues in xylan. Catalyzes the 2-O-acetylation of xylan, followed by nonenzymatic acetyl migration to the O-3 position, resulting in products that are monoacetylated at both O-2 and O-3 positions. The sequence is that of Xylan O-acetyltransferase 2 from Oryza sativa subsp. japonica (Rice).